Here is a 473-residue protein sequence, read N- to C-terminus: tRNA modification GTPase MnmE (473 aa).

Residues Arg30, Glu95, and Arg134 each coordinate (6S)-5-formyl-5,6,7,8-tetrahydrofolate. Positions Gly230–Glu394 constitute a TrmE-type G domain. GTP-binding positions include Asn240–Thr245, Ser259–Thr265, and Asp284–Gly287. Mg(2+) is bound by residues Ser244 and Thr265. Residue Lys473 coordinates (6S)-5-formyl-5,6,7,8-tetrahydrofolate.

It belongs to the TRAFAC class TrmE-Era-EngA-EngB-Septin-like GTPase superfamily. TrmE GTPase family. Homodimer. Heterotetramer of two MnmE and two MnmG subunits. K(+) serves as cofactor.

The protein localises to the cytoplasm. Exhibits a very high intrinsic GTPase hydrolysis rate. Involved in the addition of a carboxymethylaminomethyl (cmnm) group at the wobble position (U34) of certain tRNAs, forming tRNA-cmnm(5)s(2)U34. This chain is tRNA modification GTPase MnmE, found in Chlorobium phaeovibrioides (strain DSM 265 / 1930) (Prosthecochloris vibrioformis (strain DSM 265)).